The primary structure comprises 309 residues: MAPKVSDSVEQLRAAGNQNFRNGQYGEASALYERALRLLQARGSADPEEESVLYSNRAACYLKDGNCTDCIKDCTSALALVPFSIKPLLRRASAYEALEKYALAYVDYKTVLQIDNSVASALEGINRITRALMDSLGPEWRLKLPPIPVVPVSAQKRWNSLPSDNHKETAKTKSKEATATKSRVPSAGDVERAKALKEEGNDLVKKGNHKKAIEKYSESLLCSSLESATYSNRALCHLVLKQYKEAVKDCTEALKLDGKNVKAFYRRAQAYKALKDYKSSLSDISSLLQIEPRNGPAQKLRQEVNQNMN.

Residue Ser-8 is modified to Phosphoserine. TPR repeat units lie at residues 9–42, 51–84, and 85–118; these read VEQL…LQAR, SVLY…VPFS, and IKPL…DNSV. Residues 158–189 are disordered; it reads WNSLPSDNHKETAKTKSKEATATKSRVPSAGD. At Ser-160 the chain carries Phosphoserine. Basic and acidic residues predominate over residues 164–178; the sequence is DNHKETAKTKSKEAT. Ser-186 is subject to Phosphoserine. TPR repeat units follow at residues 193–226, 227–260, and 261–294; these read AKAL…SSLE, SATY…DGKN, and VKAF…EPRN. Lys-197 participates in a covalent cross-link: Glycyl lysine isopeptide (Lys-Gly) (interchain with G-Cter in SUMO2).

This sequence belongs to the Tom34 family. Interacts with HSP90A, VCP, ATP6V1D, KIAA0665, AMPK, and DMAP1 through its TPR repeat. As to expression, isoform 1 is ubiquitously expressed while isoform 2 is expressed only in mature testicular germ cells. Isoform 1 is expressed in all testicular cells. Isoform 2 is highly expressed in early to late pachytene cells but expression is significantly decreased in round spermatid cells.

The protein localises to the cytoplasm. Its subcellular location is the mitochondrion outer membrane. Plays a role in the import of cytosolically synthesized preproteins into mitochondria. Binds the mature portion of precursor proteins. Interacts with cellular components, and possesses weak ATPase activity. May be a chaperone-like protein that helps to keep newly synthesized precursors in an unfolded import compatible state. The protein is Mitochondrial import receptor subunit TOM34 (Tomm34) of Mus musculus (Mouse).